The chain runs to 417 residues: Peptidyl-Asp metalloendopeptidase (417 aa).

Residues 1-25 form the signal peptide; that stretch reads MLSRSIGKAAGGLVLGLSVAAAAHA. Position 327 (H327) interacts with Zn(2+). E328 is an active-site residue. Zn(2+)-binding residues include H331 and H337.

It belongs to the peptidase M72 family. It depends on Zn(2+) as a cofactor.

It carries out the reaction Cleavage of Xaa-|-Asp, Xaa-|-Glu and Xaa-|-cysteic acid bonds.. Metalloprotease, specifically cleaves on the N-terminal side of aspartyl, glutamyl and cysteic acid residues. In Stenotrophomonas maltophilia (strain R551-3), this protein is Peptidyl-Asp metalloendopeptidase.